Reading from the N-terminus, the 185-residue chain is Elongation factor P (185 aa).

This sequence belongs to the elongation factor P family.

It is found in the cytoplasm. Its pathway is protein biosynthesis; polypeptide chain elongation. Its function is as follows. Involved in peptide bond synthesis. Stimulates efficient translation and peptide-bond synthesis on native or reconstituted 70S ribosomes in vitro. Probably functions indirectly by altering the affinity of the ribosome for aminoacyl-tRNA, thus increasing their reactivity as acceptors for peptidyl transferase. This Geobacillus thermodenitrificans (strain NG80-2) protein is Elongation factor P.